Here is a 424-residue protein sequence, read N- to C-terminus: Histidine--tRNA ligase (424 aa).

The protein belongs to the class-II aminoacyl-tRNA synthetase family. In terms of assembly, homodimer.

The protein resides in the cytoplasm. The enzyme catalyses tRNA(His) + L-histidine + ATP = L-histidyl-tRNA(His) + AMP + diphosphate + H(+). The sequence is that of Histidine--tRNA ligase from Shigella flexneri.